A 253-amino-acid chain; its full sequence is MAGHSKFKNIQHRKGAQDTKRAKVFTKLIREIVIAAKTGSSNNPENNPRLRNALTAARIQNLPKERIDKALNSANDSSNNENYTEIRYEGYAQNGIAIIVEALTDNKNRTAAEVRSSFTKYGGSLGETGSVNYLFNHCGVIQYPINIASNEDVLEAVIEAGGHDIISDDTTHTIYTDIENFSKVLEFLTGKYGIPEDSYIGWIPLNTIIIDDKEKAEKLLKLVEVLEKSDDVQKVFGNYELSDDVYEIIQGEP.

This sequence belongs to the TACO1 family.

Its subcellular location is the cytoplasm. In Rickettsia peacockii (strain Rustic), this protein is Probable transcriptional regulatory protein RPR_05505.